Reading from the N-terminus, the 89-residue chain is UPF0237 protein CPE1496 (89 aa).

The ACT domain maps to 4–84 (VITVVGKDKV…ISVQHEDIFN (81 aa)).

Belongs to the UPF0237 family.

This is UPF0237 protein CPE1496 from Clostridium perfringens (strain 13 / Type A).